A 192-amino-acid polypeptide reads, in one-letter code: Superoxide dismutase [Fe] (192 aa).

The Fe cation site is built by His26, His73, Asp157, and His161.

It belongs to the iron/manganese superoxide dismutase family. In terms of assembly, homodimer. Fe cation serves as cofactor.

It catalyses the reaction 2 superoxide + 2 H(+) = H2O2 + O2. In terms of biological role, destroys superoxide anion radicals which are normally produced within the cells and which are toxic to biological systems. This is Superoxide dismutase [Fe] from Pseudoalteromonas translucida (strain TAC 125).